The following is a 435-amino-acid chain: Hyaluronidase-1 (435 aa).

A signal peptide spans 1-21 (MAAHLLPICALFLTLLDMAQG). 2 disulfide bridges follow: Cys-43/Cys-333 and Cys-207/Cys-221. Residue Asn-99 is glycosylated (N-linked (GlcNAc...) asparagine). Glu-131 functions as the Proton donor in the catalytic mechanism. Residues Asn-216 and Asn-350 are each glycosylated (N-linked (GlcNAc...) asparagine). In terms of domain architecture, EGF-like spans 354–430 (GALLCSQALC…YPGWQAPWCE (77 aa)). 3 disulfide bridges follow: Cys-358/Cys-369, Cys-363/Cys-418, and Cys-420/Cys-429.

The protein belongs to the glycosyl hydrolase 56 family. Highly expressed in the liver, kidney and heart. Weakly expressed in lung, placenta and skeletal muscle. No expression detected in adult brain. Isoform 1 is expressed only in bladder and prostate cancer cells, G2/G3 bladder tumor tissues and lymph node specimens showing tumor invasive tumors cells. Isoform 3, isoform 4, isoform 5 and isoform 6 are expressed in normal bladder and bladder tumor tissues.

It is found in the secreted. It localises to the lysosome. It carries out the reaction Random hydrolysis of (1-&gt;4)-linkages between N-acetyl-beta-D-glucosamine and D-glucuronate residues in hyaluronate.. May have a role in promoting tumor progression. May block the TGFB1-enhanced cell growth. The protein is Hyaluronidase-1 (HYAL1) of Homo sapiens (Human).